Reading from the N-terminus, the 470-residue chain is Solvent efflux pump outer membrane protein SrpC (470 aa).

A signal peptide spans 1-16; the sequence is MKFKSLPMFALLMLGG. Residue C17 is the site of N-palmitoyl cysteine attachment. C17 carries the S-diacylglycerol cysteine lipid modification. The interval 104-123 is disordered; that stretch reads LDGQASGNRTRLPDDLSPTG.

Belongs to the outer membrane factor (OMF) (TC 1.B.17) family.

The protein localises to the cell outer membrane. The outer membrane component of an organic solvent efflux pump. Involved in export of a number of low log POW compounds including hexane (log POW 3.5), toluene (log POW 2.5) and dimethylphthalate (log POW 2.3). The solvent resistance phenotype has been postulated to depend on the operon expression level. The chain is Solvent efflux pump outer membrane protein SrpC (srpC) from Pseudomonas putida (Arthrobacter siderocapsulatus).